Here is a 264-residue protein sequence, read N- to C-terminus: H-2 class II histocompatibility antigen, I-E beta chain (264 aa).

The signal sequence occupies residues 1–31; it reads MVWLPRVPCVAAVILLLTVLSPPVALVRNSR. A beta-1 region spans residues 32–121; it reads PRFLEYSTSE…IFDNFLVPRR (90 aa). The Extracellular portion of the chain corresponds to 32 to 225; that stretch reads PRFLEYSTSE…KAQSTSAQNK (194 aa). Disulfide bonds link C42–C106 and C144–C200. N46 carries N-linked (GlcNAc...) asparagine glycosylation. A beta-2 region spans residues 122-215; it reads VEPTVTVYPT…SLTDPVTVEW (94 aa). Residues 124 to 214 form the Ig-like C1-type domain; the sequence is PTVTVYPTKT…PSLTDPVTVE (91 aa). A connecting peptide region spans residues 216–225; that stretch reads KAQSTSAQNK. The helical transmembrane segment at 226 to 248 threads the bilayer; sequence MLSGVGGFVLGLLFLGAGLFIYF. Over 249–264 the chain is Cytoplasmic; sequence RNQKGQSGLQPTGLLS.

Belongs to the MHC class II family. Post-translationally, ubiquitinated in immature dendritic cells leading to down-regulation of MHC class II.

The protein resides in the membrane. In Mus musculus (Mouse), this protein is H-2 class II histocompatibility antigen, I-E beta chain (H2-Eb1).